Here is a 204-residue protein sequence, read N- to C-terminus: MVSEYIDSELKRLEDYALRRVKGIPNNRRLWVLTCMDERVHIEQSLGIQPDDAHIYRNAGGIVTDDAIRSASLTTNFFGTKEIIVVTHTDCGMLRFTGEEVAKYFISKGIKPTEVQLDPLLPAFRISSEEDFIKWFKFYEDLGVKSPDEMALKGVEILRNHPLIPKDVRITGYVYEVETHRLRKPNQIIYNETSKFEHGTIVKE.

Zn(2+) is bound by residues cysteine 35, histidine 88, and cysteine 91.

Belongs to the beta-class carbonic anhydrase family. As to quaternary structure, forms a hexadecameric catenane homooligomer, through interactions of two interlocked octameric rings. Exists as both octamers and hexadecamers in solution. The cofactor is Zn(2+).

It catalyses the reaction carbon disulfide + 2 H2O = 2 hydrogen sulfide + CO2 + 2 H(+). It functions in the pathway sulfur metabolism; hydrogen sulfide biosynthesis. Catalyzes the conversion of carbon disulfide into hydrogen sulfide and carbon dioxide, with carbonyl sulfide as an intermediate. Likely plays a key role in sulfur metabolism that allows Acidianus sp. A1-3 to grow on carbon disulfide as the main carbon and energy source. Does not show carbonic anhydrase activity (hydration of CO(2) to carbonate). The polypeptide is Carbon disulfide hydrolase (Acidianus sp. (strain A1-3)).